The sequence spans 316 residues: Porphobilinogen deaminase (316 aa).

Position 249 is an S-(dipyrrolylmethanemethyl)cysteine (C249).

It belongs to the HMBS family. Monomer. Dipyrromethane is required as a cofactor.

The enzyme catalyses 4 porphobilinogen + H2O = hydroxymethylbilane + 4 NH4(+). It participates in porphyrin-containing compound metabolism; protoporphyrin-IX biosynthesis; coproporphyrinogen-III from 5-aminolevulinate: step 2/4. Tetrapolymerization of the monopyrrole PBG into the hydroxymethylbilane pre-uroporphyrinogen in several discrete steps. The chain is Porphobilinogen deaminase from Nitrobacter hamburgensis (strain DSM 10229 / NCIMB 13809 / X14).